The sequence spans 549 residues: Urocanate hydratase (549 aa).

NAD(+)-binding positions include 46–47 (GG), Gln-124, 170–172 (GMG), Glu-190, Arg-195, 236–237 (NA), 257–261 (QTSAH), 267–268 (YV), and Tyr-316. Residue Cys-404 is part of the active site. Position 486 (Gly-486) interacts with NAD(+).

The protein belongs to the urocanase family. It depends on NAD(+) as a cofactor.

The protein resides in the cytoplasm. The catalysed reaction is 4-imidazolone-5-propanoate = trans-urocanate + H2O. Its pathway is amino-acid degradation; L-histidine degradation into L-glutamate; N-formimidoyl-L-glutamate from L-histidine: step 2/3. Catalyzes the conversion of urocanate to 4-imidazolone-5-propionate. In Caldanaerobacter subterraneus subsp. tengcongensis (strain DSM 15242 / JCM 11007 / NBRC 100824 / MB4) (Thermoanaerobacter tengcongensis), this protein is Urocanate hydratase.